Consider the following 209-residue polypeptide: Mediator of RNA polymerase II transcription subunit 20 (209 aa).

This sequence belongs to the Mediator complex subunit 20 family. Component of the Mediator complex.

It is found in the nucleus. Functionally, component of the Mediator complex, a coactivator involved in the regulated transcription of nearly all RNA polymerase II-dependent genes. Mediator functions as a bridge to convey information from gene-specific regulatory proteins to the basal RNA polymerase II transcription machinery. Mediator is recruited to promoters by direct interactions with regulatory proteins and serves as a scaffold for the assembly of a functional preinitiation complex with RNA polymerase II and the general transcription factors. The polypeptide is Mediator of RNA polymerase II transcription subunit 20 (SRB2) (Eremothecium gossypii (strain ATCC 10895 / CBS 109.51 / FGSC 9923 / NRRL Y-1056) (Yeast)).